The following is a 506-amino-acid chain: Maturase K (506 aa).

The protein belongs to the intron maturase 2 family. MatK subfamily.

The protein localises to the plastid. Its subcellular location is the chloroplast. Functionally, usually encoded in the trnK tRNA gene intron. Probably assists in splicing its own and other chloroplast group II introns. The sequence is that of Maturase K from Styphnolobium japonicum (Japanese pagoda tree).